Consider the following 600-residue polypeptide: tRNA(Ile)-lysidine synthase, chloroplastic (600 aa).

ATP is bound at residue 35–40 (SGGQDS).

It belongs to the tRNA(Ile)-lysidine synthase family.

The protein resides in the plastid. It is found in the chloroplast. It catalyses the reaction cytidine(34) in tRNA(Ile2) + L-lysine + ATP = lysidine(34) in tRNA(Ile2) + AMP + diphosphate + H(+). Ligates lysine onto the cytidine present at position 34 of the AUA codon-specific tRNA(Ile) that contains the anticodon CAU, in an ATP-dependent manner. Cytidine is converted to lysidine, thus changing the amino acid specificity of the tRNA from methionine to isoleucine. This Tupiella akineta (Green alga) protein is tRNA(Ile)-lysidine synthase, chloroplastic.